We begin with the raw amino-acid sequence, 391 residues long: Cell cycle checkpoint control protein RAD9A (391 aa).

Residue Tyr-28 is modified to Phosphotyrosine. The segment at 51–91 is possesses 3'-5' exonuclease activity; that stretch reads FLFAPLFFQQYQAATPGQDLLRCKILMKSFLSVFRSLAMLE. The tract at residues 266–391 is sufficient for interaction with ABL1; sequence SDTDSHSQDL…VLAEDSEGEG (126 aa). A compositionally biased stretch (basic and acidic residues) spans 268 to 282; sequence TDSHSQDLGSPERHQ. Disordered stretches follow at residues 268-301 and 319-391; these read TDSH…FAND and SRVL…EGEG. Phosphoserine is present on residues Ser-272, Ser-277, and Ser-328. Ser-341 is modified (phosphoserine; by CK2). Ser-375 and Ser-380 each carry phosphoserine. Ser-387 carries the phosphoserine; by CK2 modification.

It belongs to the rad9 family. As to quaternary structure, component of the toroidal 9-1-1 (RAD9-RAD1-HUS1) complex, composed of RAD9A, RAD1 and HUS1. The 9-1-1 complex associates with LIG1, POLB, FEN1, RAD17, HDAC1, RPA1 and RPA2. The 9-1-1 complex associates with the RAD17-RFC complex. RAD9A interacts with BCL2L1, FEN1, RAD9B, ABL1, RPA1, ATAD5 and RPA2. Interacts with DNAJC7. Interacts (when phosphorylated) with TOPBP1. Post-translationally, constitutively phosphorylated on serine and threonine amino acids in absence of DNA damage. Hyperphosphorylated by PRKCD and ABL1 upon DNA damage. Its phosphorylation by PRKCD may be required for the formation of the 9-1-1 complex. Phosphorylated at Ser-341 and Ser-387 by CK2, promoting interaction with TOPBP1.

It localises to the nucleus. The catalysed reaction is Exonucleolytic cleavage in the 3'- to 5'-direction to yield nucleoside 5'-phosphates.. In terms of biological role, component of the 9-1-1 cell-cycle checkpoint response complex that plays a major role in DNA repair. The 9-1-1 complex is recruited to DNA lesion upon damage by the RAD17-replication factor C (RFC) clamp loader complex. Acts then as a sliding clamp platform on DNA for several proteins involved in long-patch base excision repair (LP-BER). The 9-1-1 complex stimulates DNA polymerase beta (POLB) activity by increasing its affinity for the 3'-OH end of the primer-template and stabilizes POLB to those sites where LP-BER proceeds; endonuclease FEN1 cleavage activity on substrates with double, nick, or gap flaps of distinct sequences and lengths; and DNA ligase I (LIG1) on long-patch base excision repair substrates. The 9-1-1 complex is necessary for the recruitment of RHNO1 to sites of double-stranded breaks (DSB) occurring during the S phase. RAD9A possesses 3'-&gt;5' double stranded DNA exonuclease activity. This Homo sapiens (Human) protein is Cell cycle checkpoint control protein RAD9A (RAD9A).